Here is a 735-residue protein sequence, read N- to C-terminus: Type-3 glutamine synthetase (735 aa).

Residues 89–183 (THYCHWFLPL…IPTAFCSWTG (95 aa)) enclose the GS beta-grasp domain. Residues 188-621 (QKTPLLRSME…SLYDLVSTLV (434 aa)) enclose the GS catalytic domain.

Belongs to the glutamine synthetase family. Type 3 subfamily. Homohexamer.

It carries out the reaction L-glutamate + NH4(+) + ATP = L-glutamine + ADP + phosphate + H(+). The chain is Type-3 glutamine synthetase (glnA3) from Dictyostelium discoideum (Social amoeba).